The following is a 102-amino-acid chain: Class I hydrophobin 1 (102 aa).

Residues 1–18 form the signal peptide; it reads MSLFKILVAAATVATALA. 4 disulfide bridges follow: C37-C84, C45-C78, C46-C63, and C85-C97.

This sequence belongs to the fungal hydrophobin family.

Its subcellular location is the secreted. The protein localises to the cell wall. In terms of biological role, aerial growth, conidiation, and dispersal of filamentous fungi in the environment rely upon a capability of their secreting small amphipathic proteins called hydrophobins (HPBs) with low sequence identity. Class I can self-assemble into an outermost layer of rodlet bundles on aerial cell surfaces, conferring cellular hydrophobicity that supports fungal growth, development and dispersal; whereas Class II form highly ordered films at water-air interfaces through intermolecular interactions but contribute nothing to the rodlet structure. Hyd1 is essential for stress tolerance, conidial hydrophobicity, adhesion to insect cuticle, and insect infectivity/pathogenicity. Plays a neglectable role in hyphal growth and asexual development. The protein is Class I hydrophobin 1 of Metarhizium robertsii (strain ARSEF 23 / ATCC MYA-3075) (Metarhizium anisopliae (strain ARSEF 23)).